The following is a 505-amino-acid chain: L-arabinose isomerase (505 aa).

Residues E308, E335, H352, and H453 each coordinate Mn(2+).

The protein belongs to the arabinose isomerase family. Mn(2+) serves as cofactor.

The catalysed reaction is beta-L-arabinopyranose = L-ribulose. Its pathway is carbohydrate degradation; L-arabinose degradation via L-ribulose; D-xylulose 5-phosphate from L-arabinose (bacterial route): step 1/3. Functionally, catalyzes the conversion of L-arabinose to L-ribulose. In Bifidobacterium animalis subsp. lactis (strain AD011), this protein is L-arabinose isomerase.